A 420-amino-acid chain; its full sequence is MDKLKIEASGALAGNVVISGAKNAALPILMAGVLAETDFNVSNVPNLRDVNTSCELLRCLGAEVTRSGTDKVCISTTNLNEFCAPYELVKTMRASILILGPLLARYGTADVSLPGGCAIGARPVNLHLQGLEQMGAKIEVKEGYIKARVDGRLKGAHIFMDMISVGATENLLMAAALADGETIIENAAREPEVVDLANCLIAMGAKIEGAGTDTVRIQGVESLQGCDYQVMPDRIETGSFLVAAAVTRGKIRCTKADPKTLESVLAKLEDAGASITTGDDWIELDMQGKRPKAVNIKTVAYPGFPTDMQAQFCVLNALAEGTATITETIFENRFMHVPELSRMGATMELEGNTCIIHGIEKLNGAQVMATDLRASASLVIAGLVAEGTTIVDRIYHLDRGYEHIEDKFKGLGGHVERVKS.

22 to 23 (KN) serves as a coordination point for phosphoenolpyruvate. Arginine 93 is a binding site for UDP-N-acetyl-alpha-D-glucosamine. Catalysis depends on cysteine 117, which acts as the Proton donor. Cysteine 117 is subject to 2-(S-cysteinyl)pyruvic acid O-phosphothioketal. 2 residues coordinate UDP-N-acetyl-alpha-D-glucosamine: aspartate 307 and isoleucine 329.

Belongs to the EPSP synthase family. MurA subfamily.

It localises to the cytoplasm. It catalyses the reaction phosphoenolpyruvate + UDP-N-acetyl-alpha-D-glucosamine = UDP-N-acetyl-3-O-(1-carboxyvinyl)-alpha-D-glucosamine + phosphate. It participates in cell wall biogenesis; peptidoglycan biosynthesis. Functionally, cell wall formation. Adds enolpyruvyl to UDP-N-acetylglucosamine. In Shewanella halifaxensis (strain HAW-EB4), this protein is UDP-N-acetylglucosamine 1-carboxyvinyltransferase.